Consider the following 260-residue polypeptide: Proansamycin X synthase (260 aa).

The active-site Acyl-thioester intermediate is the Cys73. Residues His111 and Asp126 contribute to the active site.

It belongs to the arylamine N-acetyltransferase family.

The protein operates within antibiotic biosynthesis; rifamycin B biosynthesis. Functionally, catalyzes the release of the completed linear polyketide from the rif PKS by forming an intramolecular amide bond, in this way terminating polyketide assembly and forming the macrocyclic compound proansamycin X, an intermediate in the rifamycin B biosynthesis. This is Proansamycin X synthase (rifF) from Amycolatopsis mediterranei (strain S699) (Nocardia mediterranei).